A 112-amino-acid polypeptide reads, in one-letter code: Ribonuclease P protein component (112 aa).

The protein belongs to the RnpA family. Consists of a catalytic RNA component (M1 or rnpB) and a protein subunit.

The catalysed reaction is Endonucleolytic cleavage of RNA, removing 5'-extranucleotides from tRNA precursor.. Functionally, RNaseP catalyzes the removal of the 5'-leader sequence from pre-tRNA to produce the mature 5'-terminus. It can also cleave other RNA substrates such as 4.5S RNA. The protein component plays an auxiliary but essential role in vivo by binding to the 5'-leader sequence and broadening the substrate specificity of the ribozyme. The sequence is that of Ribonuclease P protein component from Mycoplasma mobile (strain ATCC 43663 / 163K / NCTC 11711) (Mesomycoplasma mobile).